We begin with the raw amino-acid sequence, 118 residues long: Small ribosomal subunit protein uS13 (118 aa).

The segment at 91-118 (HRRGLPVRGQRTKTNARTRKGPRKPIKK) is disordered.

This sequence belongs to the universal ribosomal protein uS13 family. Part of the 30S ribosomal subunit. Forms a loose heterodimer with protein S19. Forms two bridges to the 50S subunit in the 70S ribosome.

Functionally, located at the top of the head of the 30S subunit, it contacts several helices of the 16S rRNA. In the 70S ribosome it contacts the 23S rRNA (bridge B1a) and protein L5 of the 50S subunit (bridge B1b), connecting the 2 subunits; these bridges are implicated in subunit movement. Contacts the tRNAs in the A and P-sites. This Pectobacterium atrosepticum (strain SCRI 1043 / ATCC BAA-672) (Erwinia carotovora subsp. atroseptica) protein is Small ribosomal subunit protein uS13.